The chain runs to 461 residues: Zinc transporter 6 (461 aa).

Over 1–33 (MGTIHLFRKPQRSFFGKLLREFRLVAADRRSWK) the chain is Cytoplasmic. A helical membrane pass occupies residues 34-54 (ILLFGVINLICTGFLLMWCSS). The Extracellular portion of the chain corresponds to 55-64 (TNSIALTAYT). A helical membrane pass occupies residues 65 to 85 (YLTIFDLFSLMTCLISYWVTL). Residues 86-98 (RKPSPVYSFGFER) are Cytoplasmic-facing. Residues 99–119 (LEVLAVFASTVLAQLGALFIL) form a helical membrane-spanning segment. The Extracellular portion of the chain corresponds to 120–134 (KESAERFLEQPEIHT). Residues 135–155 (GRLLVGTFVALCFNLFTMLSI) traverse the membrane as a helical segment. Residues 156-200 (RNKPFAYVSEAASTSWLQEHVADLSRSLCGIIPGLSSIFLPRMNP) lie on the Cytoplasmic side of the membrane. Residues 201 to 221 (FVLIDLAGAFALCITYMLIEI) form a helical membrane-spanning segment. Topologically, residues 222–223 (NN) are extracellular. Residues 224–244 (YFAVDTASAIAIALMTFGTMY) form a helical membrane-spanning segment. Over 245–461 (PMSVYSGKVL…TNNRIGQPRP (217 aa)) the chain is Cytoplasmic. Residues 371–392 (NPVTSTPAKPSSPPPEFSFNTP) form a disordered region.

It belongs to the cation diffusion facilitator (CDF) transporter (TC 2.A.4) family. SLC30A subfamily. As to quaternary structure, heterodimer with SLC30A5; form a functional zinc ion transmembrane transporter. In terms of tissue distribution, expressed in brain; especially in cerebellum, hippocampus, parahippocampal gyrus, superior and middle temporal gyrus. Also expressed in B-cells, colon, eye, and lung. Lower expression was present in bone, brain, cervix, ear, heart, kidney, muscle, nerve, pancreas, prostate, skin, stomach, and testis.

It localises to the golgi apparatus. The protein localises to the trans-Golgi network membrane. Has probably no intrinsic transporter activity but together with SLC30A5 forms a functional zinc ion:proton antiporter heterodimer, mediating zinc entry into the lumen of organelles along the secretory pathway. As part of that zinc ion:proton antiporter, contributes to zinc ion homeostasis within the early secretory pathway and regulates the activation and folding of enzymes like alkaline phosphatases and enzymes involved in phosphatidylinositol glycan anchor biosynthesis. The polypeptide is Zinc transporter 6 (Homo sapiens (Human)).